Reading from the N-terminus, the 241-residue chain is Phosphoribosylaminoimidazole-succinocarboxamide synthase (241 aa).

It belongs to the SAICAR synthetase family.

The enzyme catalyses 5-amino-1-(5-phospho-D-ribosyl)imidazole-4-carboxylate + L-aspartate + ATP = (2S)-2-[5-amino-1-(5-phospho-beta-D-ribosyl)imidazole-4-carboxamido]succinate + ADP + phosphate + 2 H(+). It functions in the pathway purine metabolism; IMP biosynthesis via de novo pathway; 5-amino-1-(5-phospho-D-ribosyl)imidazole-4-carboxamide from 5-amino-1-(5-phospho-D-ribosyl)imidazole-4-carboxylate: step 1/2. This chain is Phosphoribosylaminoimidazole-succinocarboxamide synthase, found in Methanoculleus marisnigri (strain ATCC 35101 / DSM 1498 / JR1).